Consider the following 600-residue polypeptide: Pescadillo homolog (600 aa).

One can recognise a BRCT domain in the interval 351–450; it reads PTSTLLSKFI…ELLPVSQYAP (100 aa). The tract at residues 454–600 is disordered; that stretch reads LPPHLSPWGD…AELGKLNKKN (147 aa). The segment covering 478-509 has biased composition (acidic residues); sequence QGEEEEEEEEEIEGDEIEEDVEEEDEEEDEDL. Positions 478 to 600 form a coiled coil; it reads QGEEEEEEEE…AELGKLNKKN (123 aa). Positions 530 to 539 are enriched in basic residues; sequence KDKKSSKGKK. Basic and acidic residues-rich tracts occupy residues 569-580 and 588-600; these read IDKKEARQDDLT and KTKAELGKLNKKN.

It belongs to the pescadillo family. Component of the NOP7 complex, composed of ERB1, NOP7 and YTM1. The complex is held together by ERB1, which interacts with NOP7 via its N-terminal domain and with YTM1 via a high-affinity interaction between the seven-bladed beta-propeller domains of the 2 proteins. The NOP7 complex associates with the 66S pre-ribosome.

Its subcellular location is the nucleus. The protein localises to the nucleolus. It localises to the nucleoplasm. In terms of biological role, component of the NOP7 complex, which is required for maturation of the 25S and 5.8S ribosomal RNAs and formation of the 60S ribosome. This chain is Pescadillo homolog, found in Debaryomyces hansenii (strain ATCC 36239 / CBS 767 / BCRC 21394 / JCM 1990 / NBRC 0083 / IGC 2968) (Yeast).